The chain runs to 218 residues: GTP cyclohydrolase 1 (218 aa).

Residues C109, H112, and C180 each contribute to the Zn(2+) site.

This sequence belongs to the GTP cyclohydrolase I family. Toroid-shaped homodecamer, composed of two pentamers of five dimers.

The catalysed reaction is GTP + H2O = 7,8-dihydroneopterin 3'-triphosphate + formate + H(+). It functions in the pathway cofactor biosynthesis; 7,8-dihydroneopterin triphosphate biosynthesis; 7,8-dihydroneopterin triphosphate from GTP: step 1/1. The polypeptide is GTP cyclohydrolase 1 (Aeromonas salmonicida (strain A449)).